The sequence spans 354 residues: NADH-quinone oxidoreductase subunit H (354 aa).

Transmembrane regions (helical) follow at residues 22-42 (ILIR…YLIL), 91-111 (YLIA…VIPF), 124-144 (LLYV…AGWA), 168-188 (MGFA…SAIV), 203-223 (VLSW…ISGV), 255-275 (LFFL…ALLF), 291-311 (IPGF…FIWI), and 326-346 (LGWK…AIWI).

Belongs to the complex I subunit 1 family. NDH-1 is composed of 14 different subunits. Subunits NuoA, H, J, K, L, M, N constitute the membrane sector of the complex.

Its subcellular location is the cell inner membrane. The enzyme catalyses a quinone + NADH + 5 H(+)(in) = a quinol + NAD(+) + 4 H(+)(out). Its function is as follows. NDH-1 shuttles electrons from NADH, via FMN and iron-sulfur (Fe-S) centers, to quinones in the respiratory chain. The immediate electron acceptor for the enzyme in this species is believed to be ubiquinone. Couples the redox reaction to proton translocation (for every two electrons transferred, four hydrogen ions are translocated across the cytoplasmic membrane), and thus conserves the redox energy in a proton gradient. This subunit may bind ubiquinone. This chain is NADH-quinone oxidoreductase subunit H, found in Cupriavidus pinatubonensis (strain JMP 134 / LMG 1197) (Cupriavidus necator (strain JMP 134)).